We begin with the raw amino-acid sequence, 467 residues long: MSSILPFTPPVVKRLLGWKKSAGGSGGAGGGEQNGQEEKWCEKAVKSLVKKLKKTGRLDELEKAITTQNCNTKCVTIPSTCSEIWGLSTPNTIDQWDTTGLYSFSEQTRSLDGRLQVSHRKGLPHVIYCRLWRWPDLHSHHELKAIENCEYAFNLKKDEVCVNPYHYQRVETPVLPPVLVPRHTEILTELPPLDDYTHSIPENTNFPAGIEPQSNYIPETPPPGYISEDGETSDQQLNQSMDTGSPAELSPTTLSPVNHSLDLQPVTYSEPAFWCSIAYYELNQRVGETFHASQPSLTVDGFTDPSNSERFCLGLLSNVNRNATVEMTRRHIGRGVRLYYIGGEVFAECLSDSAIFVQSPNCNQRYGWHPATVCKIPPGCNLKIFNNQEFAALLAQSVNQGFEAVYQLTRMCTIRMSFVKGWGAEYRRQTVTSTPCWIELHLNGPLQWLDKVLTQMGSPSVRCSSMS.

At serine 2 the chain carries N-acetylserine. Threonine 8 bears the Phosphothreonine; by MAPK3 mark. In terms of domain architecture, MH1 spans 10–176; that stretch reads PVVKRLLGWK…YQRVETPVLP (167 aa). Position 19 is an N6-acetyllysine (lysine 19). Cysteine 74, cysteine 149, cysteine 161, and histidine 166 together coordinate Zn(2+). The segment covering 207-217 has biased composition (polar residues); that stretch reads PAGIEPQSNYI. A disordered region spans residues 207 to 251; that stretch reads PAGIEPQSNYIPETPPPGYISEDGETSDQQLNQSMDTGSPAELSP. The residue at position 220 (threonine 220) is a Phosphothreonine. Positions 221–225 match the PY-motif motif; sequence PPPGY. Residues 233–243 show a composition bias toward polar residues; that stretch reads SDQQLNQSMDT. Phosphoserine; by CAMK2 is present on serine 240. Residues serine 245, serine 250, serine 255, serine 458, serine 460, and serine 464 each carry the phosphoserine modification. In terms of domain architecture, MH2 spans 274-467; the sequence is WCSIAYYELN…SPSVRCSSMS (194 aa). Phosphoserine; by TGFBR1 occurs at positions 465 and 467.

This sequence belongs to the dwarfin/SMAD family. As to quaternary structure, monomer; in the absence of TGF-beta. Heterodimer; in the presence of TGF-beta. Forms a heterodimer with co-SMAD, SMAD4, in the nucleus to form the transactivation complex SMAD2/SMAD4. Found in a complex with SMAD3 and TRIM33 upon addition of TGF-beta. Identified in a complex that contains at least ZNF451, SMAD2, SMAD3 and SMAD4. Interacts (via the MH2 domain) with ZFYVE9; may form trimers with the SMAD4 co-SMAD. Interacts with TAZ/WWRT1. Interacts with FOXH1. Interacts with SNW1. Interacts with CREB-binding protein (CBP) and EP300. Interacts with SNON. Interacts with ALK4/ACVR1B. Interacts with SKOR1. Interacts with SKOR2. Interacts with PRDM16. Interacts (via MH2 domain) with LEMD3. Interacts with RBPMS. Interacts with WWP1. Interacts (dephosphorylated form, via the MH1 and MH2 domains) with RANBP3 (via its C-terminal R domain); the interaction results in the export of dephosphorylated SMAD3 out of the nucleus and termination of the TGF-beta signaling. Interacts with PDPK1 (via PH domain). Interacts with DAB2; the interactions are enhanced upon TGF-beta stimulation. Interacts with USP15. Interacts with PPP5C. Interacts with LDLRAD4 (via the SMAD interaction motif). Interacts (via MH2 domain) with PMEPA1 (via the SMAD interaction motif). Interacts with ZFHX3. Interacts with ZNF451. Interacts with SMURF2 when phosphorylated on Ser-465/467. Interacts with PPM1A. Interacts with TGF-beta. Interacts with TGFBR1. Interacts with TGIF. Interacts with SMAD3 and TRIM33. Interacts with ZNF580. Interacts with NEDD4L in response to TGF-beta. Interacts with HGS. Interacts with AIP1. Interacts with WWP1. Interacts with PML. Interacts weakly with ZNF8. Interacts (when phosphorylated) with RNF111; RNF111 acts as an enhancer of the transcriptional responses by mediating ubiquitination and degradation of SMAD2 inhibitors. Interacts with YAP1 (when phosphorylated at 'Ser-127'). Interacts when phosphorylated with IPO7; the interaction facilitates translocation of SMAD2 to the nucleus. Interacts with MTMR4; negatively regulates TGF-beta signaling through SMAD2 dephosphorylation and retention in endosomes. Phosphorylated on one or several of Thr-220, Ser-245, Ser-250, and Ser-255. In response to TGF-beta, phosphorylated on Ser-465/467 by TGF-beta and activin type 1 receptor kinases. TGF-beta-induced Ser-465/467 phosphorylation declines progressively in a KMT5A-dependent manner. Able to interact with SMURF2 when phosphorylated on Ser-465/467, recruiting other proteins, such as SNON, for degradation. In response to decorin, the naturally occurring inhibitor of TGF-beta signaling, phosphorylated on Ser-240 by CaMK2. Phosphorylated by MAPK3 upon EGF stimulation; which increases transcriptional activity and stability, and is blocked by calmodulin. Phosphorylated by PDPK1. Post-translationally, in response to TGF-beta, ubiquitinated by NEDD4L; which promotes its degradation. Monoubiquitinated, leading to prevent DNA-binding. Deubiquitination by USP15 alleviates inhibition and promotes activation of TGF-beta target genes. Ubiquitinated by RNF111, leading to its degradation: only SMAD2 proteins that are 'in use' are targeted by RNF111, RNF111 playing a key role in activating SMAD2 and regulating its turnover. In terms of processing, acetylated on Lys-19 by coactivators in response to TGF-beta signaling, which increases transcriptional activity. Isoform short: Acetylation increases DNA binding activity in vitro and enhances its association with target promoters in vivo. Acetylation in the nucleus by EP300 is enhanced by TGF-beta. As to expression, expressed at high levels in skeletal muscle, endothelial cells, heart and placenta.

The protein localises to the cytoplasm. It localises to the nucleus. Functionally, receptor-regulated SMAD (R-SMAD) that is an intracellular signal transducer and transcriptional modulator activated by TGF-beta (transforming growth factor) and activin type 1 receptor kinases. Binds the TRE element in the promoter region of many genes that are regulated by TGF-beta and, on formation of the SMAD2/SMAD4 complex, activates transcription. Promotes TGFB1-mediated transcription of odontoblastic differentiation genes in dental papilla cells. Positively regulates PDPK1 kinase activity by stimulating its dissociation from the 14-3-3 protein YWHAQ which acts as a negative regulator. May act as a tumor suppressor in colorectal carcinoma. This chain is Mothers against decapentaplegic homolog 2 (SMAD2), found in Homo sapiens (Human).